Consider the following 426-residue polypeptide: Na(+)/H(+) antiporter 1 (426 aa).

Helical transmembrane passes span 1 to 21 (MELMMAIGYLGLALVLGSLVA), 29 to 49 (IPDIPLLLLLGLIIGPFLQII), 57 to 77 (IFEYAGPIGLIFILLGGAFTM), 95 to 115 (ITFLITLLISGFIFNMVLNLP), 120 to 140 (VGYLFGAITAATDPATLIPVF), 158 to 178 (IFNDPLGIVSTSVILGLFGLF), 184 to 204 (LIDLITLAGGAIVVGLLLAKI), 208 to 228 (IIIHCDFHEYVAPLVLGGAML), 236 to 256 (LLPSICGYGFSGYMAVAIMGL), 286 to 306 (VFIFVFLGACIKLSMLENYFI), 309 to 329 (LLVALGSIFLARPLGVFLGLI), and 382 to 402 (IAGTIIIGTFMTILLSVILEA).

This sequence belongs to the monovalent cation:proton antiporter 1 (CPA1) transporter (TC 2.A.36) family.

The protein resides in the cell membrane. This is a Na(+)/H(+) antiporter. Can also transport lithium. The chain is Na(+)/H(+) antiporter 1 from Methanocaldococcus jannaschii (strain ATCC 43067 / DSM 2661 / JAL-1 / JCM 10045 / NBRC 100440) (Methanococcus jannaschii).